The primary structure comprises 1265 residues: Protein FAM193A (1265 aa).

The stretch at Ser107–Tyr142 forms a coiled coil. Residues Ala247–Ile272 form a disordered region. The span at Ser255 to Pro271 shows a compositional bias: low complexity. Position 293 is a phosphoserine (Ser293). Disordered regions lie at residues Asn331–Pro407, Gly553–Lys586, Val626–Pro674, Glu750–Glu785, Leu822–Ser841, Glu859–Glu881, and Glu893–Asn1163. Residues Glu355–Ser365 are compositionally biased toward acidic residues. At Ser383 the chain carries Phosphoserine. The residue at position 642 (Ser642) is a Phosphoserine. Acidic residues predominate over residues Gln757–Ser769. Residues Glu772–Thr781 show a composition bias toward low complexity. Positions Ala868–Arg877 are enriched in basic residues. Residues Arg873 to Ala932 adopt a coiled-coil conformation. Composition is skewed to basic and acidic residues over residues Glu893 to Glu905 and Asp915 to Lys929. The span at Arg931 to Arg940 shows a compositional bias: basic residues. The span at Arg953–Leu973 shows a compositional bias: polar residues. Positions Thr1093–Glu1118 form a coiled coil. Phosphoserine is present on residues Ser1129 and Ser1144. The span at Gly1149 to Gly1159 shows a compositional bias: basic residues.

Belongs to the FAM193 family.

In Homo sapiens (Human), this protein is Protein FAM193A (FAM193A).